Consider the following 617-residue polypeptide: Chaperone protein DnaK (617 aa).

The interval 579–617 is disordered; it reads KAQQEAQQASGEAGSADARGPDETVVDADYEVVDDEKRK. Positions 580-594 are enriched in low complexity; the sequence is AQQEAQQASGEAGSA. Over residues 602 to 617 the composition is skewed to acidic residues; sequence TVVDADYEVVDDEKRK.

The protein belongs to the heat shock protein 70 family.

Functionally, acts as a chaperone. This is Chaperone protein DnaK from Methanosarcina acetivorans (strain ATCC 35395 / DSM 2834 / JCM 12185 / C2A).